A 246-amino-acid polypeptide reads, in one-letter code: Small ribosomal subunit protein uS2 (246 aa).

The tract at residues Gln226–Ala246 is disordered. Over residues Glu229–Pro239 the composition is skewed to acidic residues.

The protein belongs to the universal ribosomal protein uS2 family. In terms of assembly, part of the 30S ribosomal subunit. Interacts with BrxC.

In Bacillus subtilis (strain 168), this protein is Small ribosomal subunit protein uS2 (rpsB).